Reading from the N-terminus, the 63-residue chain is Large ribosomal subunit protein uL29 (63 aa).

The protein belongs to the universal ribosomal protein uL29 family.

This chain is Large ribosomal subunit protein uL29, found in Shewanella frigidimarina (strain NCIMB 400).